Reading from the N-terminus, the 437-residue chain is Glutamate-1-semialdehyde 2,1-aminomutase (437 aa).

Lysine 273 carries the post-translational modification N6-(pyridoxal phosphate)lysine.

Belongs to the class-III pyridoxal-phosphate-dependent aminotransferase family. HemL subfamily. Homodimer. Pyridoxal 5'-phosphate serves as cofactor.

Its subcellular location is the cytoplasm. The enzyme catalyses (S)-4-amino-5-oxopentanoate = 5-aminolevulinate. Its pathway is porphyrin-containing compound metabolism; protoporphyrin-IX biosynthesis; 5-aminolevulinate from L-glutamyl-tRNA(Glu): step 2/2. The protein is Glutamate-1-semialdehyde 2,1-aminomutase of Chlamydia abortus (strain DSM 27085 / S26/3) (Chlamydophila abortus).